The chain runs to 603 residues: Growth-regulating factor 6 (603 aa).

The interval 34-58 (KHGRGNAGDQEHEWRPPAKQARGGD) is disordered. Residues 158–193 (PFTPSQWIELEHQALIYKYLAANSPVPHSLLIPIRR) form the QLQ domain. Residues 223-267 (DPEPGRCRRTDGKKWRCSRDAVADQKYCERHMNRGRHRSRKHVEG) enclose the WRC domain. Short sequence motifs (bipartite nuclear localization signal) lie at residues 228 to 238 (RCRRTDGKKWR) and 256 to 263 (RGRHRSRK). A compositionally biased stretch (low complexity) spans 561 to 571 (FGSVSSSTGSS). The tract at residues 561–582 (FGSVSSSTGSSPRLENHSVYDG) is disordered.

The protein belongs to the GRF family.

It is found in the nucleus. Functionally, transcription activator that plays a regulatory role in gibberellin-induced stem elongation. The chain is Growth-regulating factor 6 (GRF6) from Oryza sativa subsp. japonica (Rice).